The primary structure comprises 221 residues: Thiamine-phosphate synthase (221 aa).

Residues 47-51 (QYREK) and asparagine 79 each bind 4-amino-2-methyl-5-(diphosphooxymethyl)pyrimidine. Residues aspartate 80 and aspartate 99 each coordinate Mg(2+). Residue threonine 118 coordinates 4-amino-2-methyl-5-(diphosphooxymethyl)pyrimidine. A 2-[(2R,5Z)-2-carboxy-4-methylthiazol-5(2H)-ylidene]ethyl phosphate-binding site is contributed by 144–146 (SFT). A 4-amino-2-methyl-5-(diphosphooxymethyl)pyrimidine-binding site is contributed by lysine 147. 2-[(2R,5Z)-2-carboxy-4-methylthiazol-5(2H)-ylidene]ethyl phosphate is bound by residues glycine 175 and 195–196 (VT).

This sequence belongs to the thiamine-phosphate synthase family. Requires Mg(2+) as cofactor.

It catalyses the reaction 2-[(2R,5Z)-2-carboxy-4-methylthiazol-5(2H)-ylidene]ethyl phosphate + 4-amino-2-methyl-5-(diphosphooxymethyl)pyrimidine + 2 H(+) = thiamine phosphate + CO2 + diphosphate. The enzyme catalyses 2-(2-carboxy-4-methylthiazol-5-yl)ethyl phosphate + 4-amino-2-methyl-5-(diphosphooxymethyl)pyrimidine + 2 H(+) = thiamine phosphate + CO2 + diphosphate. The catalysed reaction is 4-methyl-5-(2-phosphooxyethyl)-thiazole + 4-amino-2-methyl-5-(diphosphooxymethyl)pyrimidine + H(+) = thiamine phosphate + diphosphate. Its pathway is cofactor biosynthesis; thiamine diphosphate biosynthesis; thiamine phosphate from 4-amino-2-methyl-5-diphosphomethylpyrimidine and 4-methyl-5-(2-phosphoethyl)-thiazole: step 1/1. Condenses 4-methyl-5-(beta-hydroxyethyl)thiazole monophosphate (THZ-P) and 2-methyl-4-amino-5-hydroxymethyl pyrimidine pyrophosphate (HMP-PP) to form thiamine monophosphate (TMP). The chain is Thiamine-phosphate synthase from Caldicellulosiruptor saccharolyticus (strain ATCC 43494 / DSM 8903 / Tp8T 6331).